The chain runs to 500 residues: ATP synthase subunit alpha (500 aa).

Glycine 169–threonine 176 is a binding site for ATP.

Belongs to the ATPase alpha/beta chains family. F-type ATPases have 2 components, CF(1) - the catalytic core - and CF(0) - the membrane proton channel. CF(1) has five subunits: alpha(3), beta(3), gamma(1), delta(1), epsilon(1). CF(0) has three main subunits: a(1), b(2) and c(9-12). The alpha and beta chains form an alternating ring which encloses part of the gamma chain. CF(1) is attached to CF(0) by a central stalk formed by the gamma and epsilon chains, while a peripheral stalk is formed by the delta and b chains.

The protein localises to the cell inner membrane. It catalyses the reaction ATP + H2O + 4 H(+)(in) = ADP + phosphate + 5 H(+)(out). Its function is as follows. Produces ATP from ADP in the presence of a proton gradient across the membrane. The alpha chain is a regulatory subunit. This is ATP synthase subunit alpha from Fusobacterium nucleatum subsp. nucleatum (strain ATCC 25586 / DSM 15643 / BCRC 10681 / CIP 101130 / JCM 8532 / KCTC 2640 / LMG 13131 / VPI 4355).